The primary structure comprises 432 residues: ATP-dependent RNA helicase SUB2 (432 aa).

Over residues 1–17 (MSAEGQEELLDYSDSEE) the composition is skewed to acidic residues. The tract at residues 1-35 (MSAEGQEELLDYSDSEEIAVPSNAPEAGADGADKD) is disordered. Positions 48–76 (TGFRDFLLKPELLRAIGDCGFEHPSEVQQ) match the Q motif motif. Positions 79 to 254 (IPQSILGTDV…KKFMQNPLEI (176 aa)) constitute a Helicase ATP-binding domain. Position 92-99 (92-99 (AKSGLGKT)) interacts with ATP. The DEAD box motif lies at 201 to 204 (DECD). The region spanning 266–427 (GLQQYYLKLD…EFPEEGVDSS (162 aa)) is the Helicase C-terminal domain.

Belongs to the DEAD box helicase family. DECD subfamily.

It localises to the nucleus. The enzyme catalyses ATP + H2O = ADP + phosphate + H(+). Functionally, ATP-binding RNA helicase involved in transcription elongation and required for the export of mRNA out of the nucleus. SUB2 also plays a role in pre-mRNA splicing and spliceosome assembly. May be involved in rDNA and telomeric silencing, and maintenance of genome integrity. In Meyerozyma guilliermondii (strain ATCC 6260 / CBS 566 / DSM 6381 / JCM 1539 / NBRC 10279 / NRRL Y-324) (Yeast), this protein is ATP-dependent RNA helicase SUB2 (SUB2).